The primary structure comprises 324 residues: NADH-ubiquinone oxidoreductase chain 1 (324 aa).

The next 8 helical transmembrane spans lie at 9–29, 75–95, 106–126, 146–166, 177–197, 237–257, 259–279, and 299–319; these read VLNP…LTLL, FLFL…WAPM, LGVL…LGSG, ISYE…TGGF, SIWL…STLA, ILLM…IPAL, ELTA…FLWV, and FLPM…ALAG.

The protein belongs to the complex I subunit 1 family.

The protein resides in the mitochondrion inner membrane. The catalysed reaction is a ubiquinone + NADH + 5 H(+)(in) = a ubiquinol + NAD(+) + 4 H(+)(out). Functionally, core subunit of the mitochondrial membrane respiratory chain NADH dehydrogenase (Complex I) that is believed to belong to the minimal assembly required for catalysis. Complex I functions in the transfer of electrons from NADH to the respiratory chain. The immediate electron acceptor for the enzyme is believed to be ubiquinone. This Thymallus arcticus (Arctic grayling) protein is NADH-ubiquinone oxidoreductase chain 1 (MT-ND1).